A 388-amino-acid polypeptide reads, in one-letter code: FMRFamide neuropeptides (388 aa).

A signal peptide spans 1-21; sequence MVAPLLVFLFSLQLCHTTSWA. Residues 22-172 constitute a propeptide that is removed on maturation; it reads YVGGNSLNSN…SNHQVIRDSR (151 aa). The interval 40-74 is disordered; that stretch reads FPAGTSNEVPEDAANGQDDNDDSQLTEPNDNNAPL. Residues 64–74 show a composition bias toward polar residues; sequence LTEPNDNNAPL. Phenylalanine amide is present on residues F179, F196, F208, F219, F230, F241, F253, F265, F277, F289, F301, F313, F325, F337, F346, F359, and F372. A disordered region spans residues 360-388; the sequence is GRTPTQSSDFMRFGKSLDKSENKTSDLQK. Positions 374-388 are enriched in basic and acidic residues; it reads KSLDKSENKTSDLQK. Residues 375–388 constitute a propeptide that is removed on maturation; it reads SLDKSENKTSDLQK.

The protein belongs to the FARP (FMRFamide related peptide) family. As to expression, in the brain, expressed in 2 large cells in the lateral neurons in each optic lobe, 2 slightly bigger cells on both sides of the tritocerebrum, around 14 small cells in the dorsal area, around 13 cells in the subesophageal ganglion, and in the central brain.

The protein resides in the secreted. This Musca domestica (House fly) protein is FMRFamide neuropeptides.